A 388-amino-acid polypeptide reads, in one-letter code: MKIHEYQAKEILRKFGVAVPRGYLAVTPLEAEGAARQLGGGISAVKAQIHAGGRGKGGGVKLARSPDEARQHAEAMLGMMLKTPQTGPEGQEVRKVYVEEGCRIARELYLGMTLDREIGRLAVMASVEGGVDIEEVAAKHPDKILREWISPLTGLMPFQARRLAFGLGLSGDSVTAFVRFATGLYNAYVATDASLAEINPLVITVGGEVLALDAKMNFDDNALYRHPDIAAMRDPDEEDPKETQAKEYDLSYIALDGDIGCMVNGAGLAMATMDVIKLSGGQPANFLDVGGGADEDKVTAAFKIILSDPHVKAVLVNIFGGIMKCDVIANGIVAAAKQVGLSIPLVVRLEGTNVELGKEILAHSELKIIPADDLGEAARKAVQAARAA.

The region spanning 9 to 244 (KEILRKFGVA…PDEEDPKETQ (236 aa)) is the ATP-grasp domain. Residues lysine 46, 53–55 (GRG), glutamate 99, cysteine 102, and glutamate 107 contribute to the ATP site. Positions 199 and 213 each coordinate Mg(2+). Residues asparagine 264 and 321–323 (GIM) each bind substrate.

Belongs to the succinate/malate CoA ligase beta subunit family. In terms of assembly, heterotetramer of two alpha and two beta subunits. The cofactor is Mg(2+).

The catalysed reaction is succinate + ATP + CoA = succinyl-CoA + ADP + phosphate. The enzyme catalyses GTP + succinate + CoA = succinyl-CoA + GDP + phosphate. It functions in the pathway carbohydrate metabolism; tricarboxylic acid cycle; succinate from succinyl-CoA (ligase route): step 1/1. Succinyl-CoA synthetase functions in the citric acid cycle (TCA), coupling the hydrolysis of succinyl-CoA to the synthesis of either ATP or GTP and thus represents the only step of substrate-level phosphorylation in the TCA. The beta subunit provides nucleotide specificity of the enzyme and binds the substrate succinate, while the binding sites for coenzyme A and phosphate are found in the alpha subunit. This chain is Succinate--CoA ligase [ADP-forming] subunit beta, found in Anaeromyxobacter dehalogenans (strain 2CP-C).